A 209-amino-acid polypeptide reads, in one-letter code: MRFMEEEFYKIFKGAGLIKTLIRSIFLTNRNKFSKPSKTKPIQLTECIGCGLCVDVCPTNAIKIFSFRETICSVCGTCVDVCPNNAIIKDRFTIDADKCTKCGVCVLFCPIPIIKKEIPKPKTPVILKDRCNSCGLCECEAIDIINKEINPEKCKLCLSCIEKCPLQAILTPDEYINSLIVKVDIDSCIFCRECEEICPIRGNYEHRES.

6 4Fe-4S ferredoxin-type domains span residues 38–67 (KTKP…IFSF), 63–92 (KIFS…KDRF), 90–119 (DRFT…KEIP), 122–151 (KTPV…EINP), 145–174 (INKE…TPDE), and 179–209 (LIVK…HRES). [4Fe-4S] cluster-binding residues include cysteine 47, cysteine 50, cysteine 53, cysteine 57, cysteine 72, cysteine 75, cysteine 78, cysteine 82, cysteine 99, cysteine 102, cysteine 105, and cysteine 109. Residues cysteine 154, cysteine 157, cysteine 160, cysteine 164, cysteine 188, cysteine 191, cysteine 194, and cysteine 198 each coordinate [4Fe-4S] cluster.

This is an uncharacterized protein from Methanocaldococcus jannaschii (strain ATCC 43067 / DSM 2661 / JAL-1 / JCM 10045 / NBRC 100440) (Methanococcus jannaschii).